We begin with the raw amino-acid sequence, 699 residues long: Polyribonucleotide nucleotidyltransferase (699 aa).

Residues Asp485 and Asp491 each coordinate Mg(2+). The 60-residue stretch at 552 to 611 (PRITVIKINPEKIRDVIGKGGAVIRALTEETGTTIELEDDGTVKIASSNGEATKEAIRRI) folds into the KH domain. An S1 motif domain is found at 621–689 (GRIYNGKVIR…RQGRVRLSIK (69 aa)).

It belongs to the polyribonucleotide nucleotidyltransferase family. As to quaternary structure, component of the RNA degradosome, which is a multiprotein complex involved in RNA processing and mRNA degradation. Requires Mg(2+) as cofactor.

The protein resides in the cytoplasm. The enzyme catalyses RNA(n+1) + phosphate = RNA(n) + a ribonucleoside 5'-diphosphate. Its function is as follows. Involved in mRNA degradation. Catalyzes the phosphorolysis of single-stranded polyribonucleotides processively in the 3'- to 5'-direction. The chain is Polyribonucleotide nucleotidyltransferase from Shewanella baltica (strain OS223).